A 145-amino-acid polypeptide reads, in one-letter code: [Ribosomal protein bS18]-alanine N-acetyltransferase (145 aa).

In terms of domain architecture, N-acetyltransferase spans 1–145; sequence MIETIVEQDF…ENAVIMALYL (145 aa). 67 to 69 is an acetyl-CoA binding site; it reads LAV. Glu-101 acts as the Proton acceptor in catalysis. Asn-106 is a binding site for acetyl-CoA. Tyr-113 acts as the Proton donor in catalysis.

The protein belongs to the acetyltransferase family. RimI subfamily.

The protein resides in the cytoplasm. It carries out the reaction N-terminal L-alanyl-[ribosomal protein bS18] + acetyl-CoA = N-terminal N(alpha)-acetyl-L-alanyl-[ribosomal protein bS18] + CoA + H(+). Acetylates the N-terminal alanine of ribosomal protein bS18. The sequence is that of [Ribosomal protein bS18]-alanine N-acetyltransferase from Haemophilus ducreyi (strain 35000HP / ATCC 700724).